Reading from the N-terminus, the 349-residue chain is DNA replication and repair protein RecF (349 aa).

An ATP-binding site is contributed by Gly-30–Thr-37.

Belongs to the RecF family.

It localises to the cytoplasm. Its function is as follows. The RecF protein is involved in DNA metabolism; it is required for DNA replication and normal SOS inducibility. RecF binds preferentially to single-stranded, linear DNA. It also seems to bind ATP. The polypeptide is DNA replication and repair protein RecF (Francisella tularensis subsp. holarctica (strain FTNF002-00 / FTA)).